A 247-amino-acid chain; its full sequence is Cell division protein ZapD (247 aa).

Belongs to the ZapD family. Interacts with FtsZ.

The protein localises to the cytoplasm. Functionally, cell division factor that enhances FtsZ-ring assembly. Directly interacts with FtsZ and promotes bundling of FtsZ protofilaments, with a reduction in FtsZ GTPase activity. This chain is Cell division protein ZapD, found in Escherichia fergusonii (strain ATCC 35469 / DSM 13698 / CCUG 18766 / IAM 14443 / JCM 21226 / LMG 7866 / NBRC 102419 / NCTC 12128 / CDC 0568-73).